A 242-amino-acid polypeptide reads, in one-letter code: Type III pantothenate kinase (242 aa).

Position 7 to 14 (7 to 14 (DLGNSRFK)) interacts with ATP. Residues Tyr91 and 98-101 (GVDR) each bind substrate. The Proton acceptor role is filled by Asp100. Thr121 lines the ATP pocket. Position 171 (Thr171) interacts with substrate.

The protein belongs to the type III pantothenate kinase family. Homodimer. NH4(+) is required as a cofactor. It depends on K(+) as a cofactor.

Its subcellular location is the cytoplasm. It catalyses the reaction (R)-pantothenate + ATP = (R)-4'-phosphopantothenate + ADP + H(+). It participates in cofactor biosynthesis; coenzyme A biosynthesis; CoA from (R)-pantothenate: step 1/5. In terms of biological role, catalyzes the phosphorylation of pantothenate (Pan), the first step in CoA biosynthesis. The protein is Type III pantothenate kinase of Xanthomonas euvesicatoria pv. vesicatoria (strain 85-10) (Xanthomonas campestris pv. vesicatoria).